A 397-amino-acid polypeptide reads, in one-letter code: MLLETGLERDRARPGAAAVCTLGGTREIPLCAGCDQHILDRFILKALDRHWHSKCLKCSDCHTPLAERCFSRGESVYCKDDFFKRFGTKCAACQLGIPPTQVVRRAQDFVYHLHCFACVVCKRQLATGDEFYLMEDSRLVCKADYETAKQREAEATAKRPRTTITAKQLETLKSAYNTSPKPARHVREQLSSETGLDMRVVQVWFQNRRAKEKRLKKDAGRQRWGQYFRNMKRSRGGSKSDKDSVQEGQDSDAEVSFPDEPSLAEMGPANGLYGSLGEPTQALGRPSGALGNFSLEHGGLAGPEQYRELRPGSPYGVPPSPAAPQSLPGPQPLLSSLVYPDTSLGLVPSGAPGGPPPMRVLAGNGPSSDLSTGSSGGYPDFPASPASWLDEVDHAQF.

LIM zinc-binding domains lie at 31–81 (CAGC…CKDD) and 90–144 (CAAC…CKAD). Position 63 is a phosphothreonine (Thr63). A Phosphoserine modification is found at Ser71. Residues 157-216 (AKRPRTTITAKQLETLKSAYNTSPKPARHVREQLSSETGLDMRVVQVWFQNRRAKEKRLK) constitute a DNA-binding region (homeobox). The interval 212 to 397 (EKRLKKDAGR…WLDEVDHAQF (186 aa)) is disordered. At Tyr227 the chain carries Phosphotyrosine. Ser234 and Ser238 each carry phosphoserine. Pro residues predominate over residues 316–331 (GVPPSPAAPQSLPGPQ).

As to quaternary structure, interacts with POU1F1. At neuronal promoters, interacts with LDB1, in motor neurons LDB1 is displaced by ISL1 and a ternary complex is formed in which ISL1 contacts both LHX3 and LDB1; allosteric structural changes in the DNA binding domain of LHX3, induced by the ISL1-LHX3 interaction, may explain differences in sequence specificity of the different complexes. Interacts with LDB2. May interact with CITED2/MRG1.

The protein localises to the nucleus. In terms of biological role, transcription factor. Recognizes and binds to the consensus sequence motif 5'-AATTAATTA-3' in the regulatory elements of target genes, such as glycoprotein hormones alpha chain CGA and visual system homeobox CHX10, positively modulating transcription; transcription can be co-activated by LDB2. Synergistically enhances transcription from the prolactin promoter in cooperation with POU1F1/Pit-1. Required for the establishment of the specialized cells of the pituitary gland and the nervous system. Involved in the development of interneurons and motor neurons in cooperation with LDB1 and ISL1. The polypeptide is LIM/homeobox protein Lhx3 (LHX3) (Homo sapiens (Human)).